Here is a 441-residue protein sequence, read N- to C-terminus: Ribulose bisphosphate carboxylase large chain (441 aa).

Residues N89 and T139 each coordinate substrate. Catalysis depends on K141, which acts as the Proton acceptor. K143 is a substrate binding site. Positions 167, 169, and 170 each coordinate Mg(2+). K167 is modified (N6-carboxylysine). H260 (proton acceptor) is an active-site residue. 3 residues coordinate substrate: X261, H293, and S345.

It belongs to the RuBisCO large chain family. Type I subfamily. As to quaternary structure, heterohexadecamer of 8 large chains and 8 small chains; disulfide-linked. The disulfide link is formed within the large subunit homodimers. Mg(2+) is required as a cofactor. Post-translationally, the disulfide bond which can form in the large chain dimeric partners within the hexadecamer appears to be associated with oxidative stress and protein turnover.

The protein resides in the plastid. Its subcellular location is the chloroplast. It catalyses the reaction 2 (2R)-3-phosphoglycerate + 2 H(+) = D-ribulose 1,5-bisphosphate + CO2 + H2O. The enzyme catalyses D-ribulose 1,5-bisphosphate + O2 = 2-phosphoglycolate + (2R)-3-phosphoglycerate + 2 H(+). Its function is as follows. RuBisCO catalyzes two reactions: the carboxylation of D-ribulose 1,5-bisphosphate, the primary event in carbon dioxide fixation, as well as the oxidative fragmentation of the pentose substrate in the photorespiration process. Both reactions occur simultaneously and in competition at the same active site. This Apocynum cannabinum (Hemp dogbane) protein is Ribulose bisphosphate carboxylase large chain.